Consider the following 404-residue polypeptide: Glucose-1-phosphate adenylyltransferase (404 aa).

Residues tyrosine 99, glycine 164, 179-180 (EK), and serine 197 each bind alpha-D-glucose 1-phosphate.

The protein belongs to the bacterial/plant glucose-1-phosphate adenylyltransferase family.

The catalysed reaction is alpha-D-glucose 1-phosphate + ATP + H(+) = ADP-alpha-D-glucose + diphosphate. It functions in the pathway capsule biogenesis; capsule polysaccharide biosynthesis. The protein operates within glycan biosynthesis; glycogen biosynthesis. Involved in the biosynthesis of ADP-glucose, a building block, required in the biosynthesis of maltose-1-phosphate (M1P) and in the elongation reactions to produce linear alpha-1,4-glucans. Catalyzes the reaction between ATP and alpha-D-glucose 1-phosphate (G1P) to produce pyrophosphate and ADP-Glc. The protein is Glucose-1-phosphate adenylyltransferase of Mycobacterium bovis (strain ATCC BAA-935 / AF2122/97).